The following is a 580-amino-acid chain: External alternative NAD(P)H-ubiquinone oxidoreductase B3, mitochondrial (580 aa).

Residues 1–38 (MRPFAYFERLSQAFHDYPSLSKILVVSTISGGGLIVYS) constitute a mitochondrion transit peptide. 57–87 (KVVLLGTGWAGASFLKTLNNSSYEVQVISPR) is an FAD binding site. 221 to 257 (LHFVVVGGGPTGVEFASELHDFVNEDLVKLYPKAKNL) contributes to the NAD(+) binding site. Residues 377–412 (KVMEDIAAIFKKADKENSGTLTMKEFHEVMSDICDR) enclose the EF-hand domain. Ca(2+) contacts are provided by D390, S394, T396, and E401. The short motif at 571–580 (FIFGRDSSRI) is the Microbody targeting signal element.

The protein belongs to the NADH dehydrogenase family. FAD is required as a cofactor. As to expression, expressed at low levels in seedlings, roots, stems, buds and flowers and, to a lower extent, in leaves and cotyledons.

Its subcellular location is the mitochondrion inner membrane. It is found in the peroxisome. It catalyses the reaction a quinone + NADH + H(+) = a quinol + NAD(+). The catalysed reaction is a ubiquinone + NADH + H(+) = a ubiquinol + NAD(+). Its function is as follows. Alternative NADH-ubiquinone oxidoreductase which catalyzes the oxidation of mitochondrial NADH does not translocate protons across the inner mitochondrial membrane. The sequence is that of External alternative NAD(P)H-ubiquinone oxidoreductase B3, mitochondrial (NDB3) from Arabidopsis thaliana (Mouse-ear cress).